We begin with the raw amino-acid sequence, 236 residues long: Ribosome maturation protein SDO1 homolog (236 aa).

This sequence belongs to the SDO1/SBDS family.

This is Ribosome maturation protein SDO1 homolog from Pyrococcus abyssi (strain GE5 / Orsay).